The chain runs to 108 residues: UPF0060 membrane protein RER_49640 (108 aa).

4 helical membrane-spanning segments follow: residues 8 to 28 (LLFVLAALLEIGGAWLVWQGI), 33 to 53 (GWIWVGLGVISLGLYGLVATM), 62 to 82 (ILAAYGGIFVAGSLLWAVVMD), and 87 to 107 (DRFDIAGALICLVGVGVIMYA).

The protein belongs to the UPF0060 family.

The protein localises to the cell membrane. The polypeptide is UPF0060 membrane protein RER_49640 (Rhodococcus erythropolis (strain PR4 / NBRC 100887)).